We begin with the raw amino-acid sequence, 660 residues long: Acetyl-coenzyme A synthetase (660 aa).

CoA-binding positions include 197–200 (RGGK) and Thr-317. Residues 397–399 (GEP), 421–426 (DTFWQT), Asp-512, and Arg-528 contribute to the ATP site. Residue Ser-536 coordinates CoA. Residue Arg-539 participates in ATP binding. Mg(2+)-binding residues include Val-550 and Val-555. At Lys-625 the chain carries N6-acetyllysine.

The protein belongs to the ATP-dependent AMP-binding enzyme family. The cofactor is Mg(2+). Acetylated. Deacetylation by the SIR2-homolog deacetylase activates the enzyme.

The catalysed reaction is acetate + ATP + CoA = acetyl-CoA + AMP + diphosphate. Catalyzes the conversion of acetate into acetyl-CoA (AcCoA), an essential intermediate at the junction of anabolic and catabolic pathways. AcsA undergoes a two-step reaction. In the first half reaction, AcsA combines acetate with ATP to form acetyl-adenylate (AcAMP) intermediate. In the second half reaction, it can then transfer the acetyl group from AcAMP to the sulfhydryl group of CoA, forming the product AcCoA. The sequence is that of Acetyl-coenzyme A synthetase from Cupriavidus taiwanensis (strain DSM 17343 / BCRC 17206 / CCUG 44338 / CIP 107171 / LMG 19424 / R1) (Ralstonia taiwanensis (strain LMG 19424)).